Here is a 574-residue protein sequence, read N- to C-terminus: uncharacterized protein (574 aa).

Transmembrane regions (helical) follow at residues 14–34 (FFPT…LFFG), 54–74 (VVPL…LGIV), 124–144 (WLMA…SDTA), 205–225 (ICKC…TGTI), 253–273 (SWMA…WFIV), 323–343 (LVIF…VIPG), 350–370 (KGYV…FIWP), 403–423 (FPWS…AVRV), 441–461 (MPFF…TEFS), 485–505 (PLYF…LPMA), and 520–540 (MIDM…ITAI). Residues Asn-565 and Asn-569 are each glycosylated (N-linked (GlcNAc...) asparagine).

The protein belongs to the SLC13A/DASS transporter (TC 2.A.47) family. NADC subfamily.

It is found in the membrane. This is an uncharacterized protein from Caenorhabditis elegans.